The following is a 245-amino-acid chain: 4-hydroxy-tetrahydrodipicolinate reductase (245 aa).

Residues 7-12 (GAKGKV), aspartate 33, 75-77 (GTT), and 102-105 (APNF) contribute to the NAD(+) site. Histidine 132 acts as the Proton donor/acceptor in catalysis. (S)-2,3,4,5-tetrahydrodipicolinate is bound at residue histidine 133. Lysine 136 serves as the catalytic Proton donor. Residue 142 to 143 (GT) coordinates (S)-2,3,4,5-tetrahydrodipicolinate.

This sequence belongs to the DapB family.

The protein resides in the cytoplasm. The catalysed reaction is (S)-2,3,4,5-tetrahydrodipicolinate + NAD(+) + H2O = (2S,4S)-4-hydroxy-2,3,4,5-tetrahydrodipicolinate + NADH + H(+). It carries out the reaction (S)-2,3,4,5-tetrahydrodipicolinate + NADP(+) + H2O = (2S,4S)-4-hydroxy-2,3,4,5-tetrahydrodipicolinate + NADPH + H(+). It participates in amino-acid biosynthesis; L-lysine biosynthesis via DAP pathway; (S)-tetrahydrodipicolinate from L-aspartate: step 4/4. Its function is as follows. Catalyzes the conversion of 4-hydroxy-tetrahydrodipicolinate (HTPA) to tetrahydrodipicolinate. The polypeptide is 4-hydroxy-tetrahydrodipicolinate reductase (Mycolicibacterium paratuberculosis (strain ATCC BAA-968 / K-10) (Mycobacterium paratuberculosis)).